A 184-amino-acid polypeptide reads, in one-letter code: dCTP deaminase (184 aa).

A dCTP-binding site is contributed by 107-112; sequence KSTIAR. Glutamate 133 acts as the Proton donor/acceptor in catalysis. 3 residues coordinate dCTP: glutamine 152, tyrosine 166, and glutamine 176.

It belongs to the dCTP deaminase family. Homotrimer.

It catalyses the reaction dCTP + H2O + H(+) = dUTP + NH4(+). It functions in the pathway pyrimidine metabolism; dUMP biosynthesis; dUMP from dCTP (dUTP route): step 1/2. Catalyzes the deamination of dCTP to dUTP. This Roseiflexus castenholzii (strain DSM 13941 / HLO8) protein is dCTP deaminase.